The sequence spans 741 residues: MESCNCIEPQWPADELLMKYQYISDFFIAIAYFSIPLELIYFVKKSAVFPYRWVLVQFGAFIVLCGATHLINLWTFNMHSKTVEIVMTTAKIMTAVVSCATALMLVHIIPDLLSVKTRELFLKNKAAELDREMGLIRTQEETGRHVRMLTHEIRSTLDRHTILKTTLVELGRTLALEECALWMPTRTGLELQLSYTLRQQNPVGFTVPIHLPVINQVFSSNHAIKISPNSPIARLRPIAGKYMPGEVVGVRVPLLHLSNFQINDWPELSTKRYALMVLMLPSDSARQWHVHELELVEVVADQVAVALSHAAILEESMRARDLLMEQNVALDMARREAETAIRARNDFLAVMNHEMRTPMHAIIALSSLLQETELTPEQRLMVETVLKSSNLLATLINDVLDLSRLEDGSLQLDIGTFNLHALLREVHNLIKPIASVKKLCISLNVATDLPEYAVGDEKRLVQIILNVVGNAVKFSKEGNISITAFVAKSESLRDPRAPDFFPICGENQFYLRVQVKDSGLGINPQDIPRLFTKFAQTQPVATKNSGGSGLGLAICKRFVNLMEGHIWIDSEGPGKGCTATFVVKLGIPERSSEPKLLLMPKVPANHGQTNFSGLKVLLLDDNGVSRAVTRGLLAHLGCDVTTVSSSDELLRVVSQDYKVVFMDVCMPEVDGFEIAVRIHEKFMTRHERPLIVALTGNIDQVTKDNCTRVGMEGVVLKPVSIDKMRNVLSNLLEHRVLFEAI.

3 helical membrane passes run 23–43 (ISDF…IYFV), 53–73 (WVLV…LINL), and 92–112 (IMTA…IPDL). Cu cation contacts are provided by cysteine 65 and histidine 69. A GAF domain is found at 158-307 (DRHTILKTTL…VVADQVAVAL (150 aa)). Residues 350 to 589 (VMNHEMRTPM…TFVVKLGIPE (240 aa)) form the Histidine kinase domain. Histidine 353 carries the post-translational modification Phosphohistidine; by autocatalysis. The region spanning 615-732 (KVLLLDDNGV…KMRNVLSNLL (118 aa)) is the Response regulatory domain. A 4-aspartylphosphate modification is found at aspartate 663.

The protein belongs to the ethylene receptor family. As to quaternary structure, homodimer; disulfide-linked. It depends on Cu cation as a cofactor. Post-translationally, activation probably requires a transfer of a phosphate group between a His in the transmitter domain and an Asp of the receiver domain.

It localises to the endoplasmic reticulum membrane. The catalysed reaction is ATP + protein L-histidine = ADP + protein N-phospho-L-histidine.. In terms of biological role, may act early in the ethylene signal transduction pathway, possibly as an ethylene receptor, or as a regulator of the pathway. The sequence is that of Ethylene receptor 2 (ETR2) from Pelargonium hortorum (Common geranium).